Consider the following 90-residue polypeptide: Probable Fe(2+)-trafficking protein (90 aa).

This sequence belongs to the Fe(2+)-trafficking protein family. In terms of assembly, monomer.

Its function is as follows. Could be a mediator in iron transactions between iron acquisition and iron-requiring processes, such as synthesis and/or repair of Fe-S clusters in biosynthetic enzymes. The chain is Probable Fe(2+)-trafficking protein from Hamiltonella defensa subsp. Acyrthosiphon pisum (strain 5AT).